The chain runs to 60 residues: Mastoparan-VB2 (60 aa).

A signal peptide spans 1–27 (MKNTILLLFTAFIFLMGFFGMSADALA). AXPX repeat units lie at residues 27-30 (ADPK), 31-34 (ADPL), 35-38 (AGPF), and 41-44 (ADPD). A propeptide spanning residues 28–45 (DPKADPLAGPFPDADPDP) is cleaved from the precursor. At leucine 59 the chain carries Leucine amide.

The protein belongs to the MCD family. Mastoparan subfamily. In terms of tissue distribution, expressed by the venom gland.

The protein localises to the secreted. It localises to the target cell membrane. Antimicrobial peptide. Shows activity against both Gram-positive and -negative bacteria, as well against fungi. Also promotes moderate mast cell degranulation. Does not show hemolytic activity on rabbit and human erythrocytes. Its mast cell degranulation activity may be related to the activation of G-protein coupled receptors in mast cells as well as interaction with other proteins located in cell endosomal membranes in the mast cells. The protein is Mastoparan-VB2 of Vespa bicolor (Black shield wasp).